Consider the following 275-residue polypeptide: Mitochondrial fission factor homolog A (275 aa).

Residues 1–255 (MAEVNRIHYE…ENKERAKREM (255 aa)) are Cytoplasmic-facing. The segment at 100–171 (DFLEPEPAAN…PLISPEDSQN (72 aa)) is disordered. Positions 114–130 (PREEMKSHFRSRREQCR) are enriched in basic and acidic residues. The span at 131–142 (SENSTMRRNGQI) shows a compositional bias: polar residues. A coiled-coil region spans residues 223-253 (LTDAASLRRQIIKLNRRLQLLEHENKERAKR). A helical; Anchor for type IV membrane protein transmembrane segment spans residues 256-273 (VMYSLTVAFWLVNSWIWL). Residues 274 to 275 (RR) lie on the Extracellular side of the membrane.

Belongs to the Tango11 family.

It localises to the mitochondrion outer membrane. Its subcellular location is the peroxisome. Plays a role in mitochondrial and peroxisomal fission. Promotes the recruitment and association of the fission mediator dynamin-related protein 1 (DNM1L) to the mitochondrial surface. The protein is Mitochondrial fission factor homolog A of Danio rerio (Zebrafish).